A 470-amino-acid chain; its full sequence is Putative gustatory receptor 28b (470 aa).

Topologically, residues 1–76 (MDIEMAKEPV…KTGKKAIKKT (76 aa)) are cytoplasmic. Residues 77–97 (IFGYINGIMHIAMFVFAYSLT) form a helical membrane-spanning segment. Residues 98-119 (IYNNCESVASYFFRSRITYFGD) lie on the Extracellular side of the membrane. Residues 120-140 (LMQIVSGFIGVTVIYLTAFVP) traverse the membrane as a helical segment. Residues 141-175 (NHRLERCLQKFHTMDVQLQTVGVKIMYSKVLRFSY) are Cytoplasmic-facing. Residues 176 to 196 (MVLISMFLVNVLFTGGTFSVL) form a helical membrane-spanning segment. Over 197-204 (YSSEVAPT) the chain is Extracellular. A helical membrane pass occupies residues 205-225 (MALHFTFLIQHTVIAIAIALF). The Cytoplasmic segment spans residues 226–309 (SCFTYLVEMR…ATANKYFTYQ (84 aa)). The helical transmembrane segment at 310–330 (LLTIISIAFLIIVFDAYYVLE) threads the bilayer. At 331 to 346 (TLLGKSKRESKFKTVE) the chain is on the extracellular side. The chain crosses the membrane as a helical span at residues 347 to 367 (FVTFFSCQMILYLIAIISIVE). The Cytoplasmic portion of the chain corresponds to 368–423 (GSNRAIKKSEKTGGIVHSLLNKTKSAEVKEKLQQFSMQLMHLKINFTAAGLFNIDR). The helical transmembrane segment at 424 to 444 (TLYFTISGALTTYLIILLQFT) threads the bilayer. Over 445-470 (SNSPNNGYGNGSSCCETFNNMTNHTL) the chain is Extracellular. Residues Asn454, Asn464, and Asn467 are each glycosylated (N-linked (GlcNAc...) asparagine).

This sequence belongs to the insect chemoreceptor superfamily. Gustatory receptor (GR) family. Gr66a subfamily. As to expression, isoforms A and E have taste neuron-specific expression restricted to the labial palps, the internal taste organs in the pharynx, and the legs. In addition to expression in a large number of taste neurons, isoform A is also expressed in a few nonchemosensory neurons, including the campaniform sensilla of the wing, leg stretch receptors, and multiple dendritic neurons in the abdomen. Isoform B is the only receptor not expressed in gustatory receptor neurons in the labellum. We observe expression of this receptor in a single large cell at the base of each maxillary palp, in campaniform sensilla of the wing, and multiple dendritic neurons in the abdomen. Isoform C is expressed by many gustatory receptor neurons in the labial palps, the pharyngeal taste clusters, and taste neurons in the legs. In addition, isoform C expressed in a single cell at the base of the maxillary palps, neurons in the Johnston's organ (JO), campaniform sensilla of the wing, stretch receptors and the femoral chordotonal organ of the legs, and multiple dendritic neurons in the abdomen. Isoform D is expressed in a small number of gustatory receptor neurons in the labial palps, the ventral cibarial sense organ (VCSO), and legs. Atypical expression is observed in three neurons in the arista, campaniform sensilla of the wing, stretch and femoral chordotonal organ receptors in the legs, and multiple dendritic neurons in the abdomen. In larvae, Isoform A is expressed in neurons of the terminal external chemosensory organ and the dorsal external chemosensory organ; and isoform E is expressed in neurons of the terminal external chemosensory organ.

The protein localises to the cell membrane. In terms of biological role, probable gustatory receptor which mediates acceptance or avoidance behavior, depending on its substrates. Atypical expression also suggests nongustatory roles in the nervous system and tissues involved in proprioception, hygroreception, and other sensory modalities. It is also possible that it has chemosensory roles in the detection of internal ligands. This chain is Putative gustatory receptor 28b (Gr28b), found in Drosophila melanogaster (Fruit fly).